A 537-amino-acid polypeptide reads, in one-letter code: 2-succinyl-5-enolpyruvyl-6-hydroxy-3-cyclohexene-1-carboxylate synthase (537 aa).

Belongs to the TPP enzyme family. MenD subfamily. Homodimer. Mg(2+) is required as a cofactor. Requires Mn(2+) as cofactor. Thiamine diphosphate serves as cofactor.

The catalysed reaction is isochorismate + 2-oxoglutarate + H(+) = 5-enolpyruvoyl-6-hydroxy-2-succinyl-cyclohex-3-ene-1-carboxylate + CO2. Its pathway is quinol/quinone metabolism; 1,4-dihydroxy-2-naphthoate biosynthesis; 1,4-dihydroxy-2-naphthoate from chorismate: step 2/7. The protein operates within quinol/quinone metabolism; menaquinone biosynthesis. Catalyzes the thiamine diphosphate-dependent decarboxylation of 2-oxoglutarate and the subsequent addition of the resulting succinic semialdehyde-thiamine pyrophosphate anion to isochorismate to yield 2-succinyl-5-enolpyruvyl-6-hydroxy-3-cyclohexene-1-carboxylate (SEPHCHC). In Nocardioides sp. (strain ATCC BAA-499 / JS614), this protein is 2-succinyl-5-enolpyruvyl-6-hydroxy-3-cyclohexene-1-carboxylate synthase.